We begin with the raw amino-acid sequence, 601 residues long: Tripeptidyl-peptidase SED4 (601 aa).

The N-terminal stretch at 1-22 is a signal peptide; it reads MVSFTLRAIGACLVSLPALVTA. A propeptide spans 23–202 (removed in mature form); it reads APTSHISGDF…SVFTSDLEIT (180 aa). Residues Asn210 and Asn281 are each glycosylated (N-linked (GlcNAc...) asparagine). The 390-residue stretch at 212–601 folds into the Peptidase S53 domain; the sequence is TITPDCIRDL…ETLSKLVLQY (390 aa). Catalysis depends on charge relay system residues Glu288 and Asp292. The N-linked (GlcNAc...) asparagine glycan is linked to Asn323. Ser504 (charge relay system) is an active-site residue. Residues Asp546 and Ile547 each coordinate Ca(2+). Asn575 carries an N-linked (GlcNAc...) asparagine glycan. Residues Gly579 and Asp581 each contribute to the Ca(2+) site.

Ca(2+) is required as a cofactor.

The protein resides in the secreted. Its subcellular location is the extracellular space. The catalysed reaction is Release of an N-terminal tripeptide from a polypeptide.. Functionally, secreted tripeptidyl-peptidase which degrades proteins at acidic pHs and is involved in virulence. This chain is Tripeptidyl-peptidase SED4 (SED4), found in Arthroderma otae (strain ATCC MYA-4605 / CBS 113480) (Microsporum canis).